The primary structure comprises 412 residues: NADH-quinone oxidoreductase subunit D (412 aa).

It belongs to the complex I 49 kDa subunit family. NDH-1 is composed of 14 different subunits. Subunits NuoB, C, D, E, F, and G constitute the peripheral sector of the complex.

The protein localises to the cell inner membrane. The enzyme catalyses a quinone + NADH + 5 H(+)(in) = a quinol + NAD(+) + 4 H(+)(out). NDH-1 shuttles electrons from NADH, via FMN and iron-sulfur (Fe-S) centers, to quinones in the respiratory chain. The immediate electron acceptor for the enzyme in this species is believed to be a menaquinone. Couples the redox reaction to proton translocation (for every two electrons transferred, four hydrogen ions are translocated across the cytoplasmic membrane), and thus conserves the redox energy in a proton gradient. The polypeptide is NADH-quinone oxidoreductase subunit D (Flavobacterium psychrophilum (strain ATCC 49511 / DSM 21280 / CIP 103535 / JIP02/86)).